Consider the following 316-residue polypeptide: HPr kinase/phosphorylase (316 aa).

Residues His146 and Lys167 contribute to the active site. Gly161–Ser168 lines the ATP pocket. Ser168 is a binding site for Mg(2+). Residue Asp185 is the Proton acceptor; for phosphorylation activity. Proton donor; for dephosphorylation activity of the active site. Residues Leu209 to Asp218 form an important for the catalytic mechanism of both phosphorylation and dephosphorylation region. Position 210 (Glu210) interacts with Mg(2+). Arg252 is an active-site residue. An important for the catalytic mechanism of dephosphorylation region spans residues Gln273–Arg278.

It belongs to the HPrK/P family. As to quaternary structure, homohexamer. Mg(2+) serves as cofactor.

The enzyme catalyses [HPr protein]-L-serine + ATP = [HPr protein]-O-phospho-L-serine + ADP + H(+). It catalyses the reaction [HPr protein]-O-phospho-L-serine + phosphate + H(+) = [HPr protein]-L-serine + diphosphate. Catalyzes the ATP- as well as the pyrophosphate-dependent phosphorylation of a specific serine residue in HPr, a phosphocarrier protein of the phosphoenolpyruvate-dependent sugar phosphotransferase system (PTS). HprK/P also catalyzes the pyrophosphate-producing, inorganic phosphate-dependent dephosphorylation (phosphorolysis) of seryl-phosphorylated HPr (P-Ser-HPr). In Polaromonas naphthalenivorans (strain CJ2), this protein is HPr kinase/phosphorylase.